The following is a 657-amino-acid chain: MNKTCARCQKVVYPIEELKCLDKTWHKTCFKCTECGMTLNMKTYKGYNKMPYCEAHIPKAKATAIADTPELKRIAENTKIQSNVKYHADFEKAKGKFTQVADDPETLRIKQNTKHISNVAYHGDLEKKAAMEKQRGSAEVSDSSNESEYFSEQLAAEQFSQYAPTASPIPPAATTLHQQQQQLQHQQQQQYQQHQQQLQQQQHQHQHYLQQQQQTLPPPPIQHQQYNTAAITPTYQQLQQQQQQQQQQRAQQQQLHDPYAHYQQPQALRQQQQQQQQQQQQLLQQQAIKQASHLYPTATSQQQQMPPPQSPANPQQQALNSYNEMRSAILQNSHHPSGNSVDQYDQPQQQQHQPQQQSTNPTLVAAQQQQSHHSLLNNNASNGGISHSHHSNINNNGHGSQNQMLPPQMRRSAASVVAYDGNSKQQVAAGPGAAQNHLQQLYASPNYAAVTPSENSINVKQHASNGHMPNQQQQHVAGGSNIGKIADYDPLTDGPRVVPNAGRSSTTLVYSSEPRGNQGGNSVYPKRIGSVSDIDPANGIYGSLTAAEQAHQQQKHQQYYQQVQMMQQQEHPPQQQQMRQQPSYSSLQEKQSRQSTAMRVYRAIYDYEAQDVDEVSFREGDVIFEVESIDSGWMTGRVERTGKTGMLPANYVEQAVI.

Residues 3–63 (KTCARCQKVV…EAHIPKAKAT (61 aa)) form the LIM zinc-binding domain. 2 Nebulin repeats span residues 64–95 (AIAD…KAKG) and 96–130 (KFTQ…KKAA). Disordered stretches follow at residues 130-151 (AMEK…EYFS), 164-223 (PTAS…PIQH), 235-257 (YQQL…QLHD), 294-318 (LYPT…QQQA), 332-415 (NSHH…SAAS), and 460-528 (KQHA…PKRI). Positions 140–150 (VSDSSNESEYF) are enriched in polar residues. Composition is skewed to low complexity over residues 172–215 (AATT…QQQT) and 236–254 (QQLQ…QQQQ). The segment covering 332-341 (NSHHPSGNSV) has biased composition (polar residues). Positions 342–357 (DQYDQPQQQQHQPQQQ) are enriched in low complexity. Polar residues predominate over residues 358–370 (STNPTLVAAQQQQ). A compositionally biased stretch (low complexity) spans 371–403 (SHHSLLNNNASNGGISHSHHSNINNNGHGSQNQ). Polar residues predominate over residues 460–475 (KQHASNGHMPNQQQQH). Phosphoserine occurs at positions 505 and 530. The segment at 548–592 (EQAHQQQKHQQYYQQVQMMQQQEHPPQQQQMRQQPSYSSLQEKQS) is disordered. The span at 549–586 (QAHQQQKHQQYYQQVQMMQQQEHPPQQQQMRQQPSYSS) shows a compositional bias: low complexity. One can recognise an SH3 domain in the interval 596–657 (TAMRVYRAIY…PANYVEQAVI (62 aa)).

In terms of assembly, interacts with osk.

This chain is LIM and SH3 domain protein Lasp, found in Drosophila melanogaster (Fruit fly).